The following is a 246-amino-acid chain: 5-oxoprolinase subunit A (246 aa).

Belongs to the LamB/PxpA family. In terms of assembly, forms a complex composed of PxpA, PxpB and PxpC.

It catalyses the reaction 5-oxo-L-proline + ATP + 2 H2O = L-glutamate + ADP + phosphate + H(+). Its function is as follows. Catalyzes the cleavage of 5-oxoproline to form L-glutamate coupled to the hydrolysis of ATP to ADP and inorganic phosphate. This chain is 5-oxoprolinase subunit A, found in Vibrio cholerae serotype O1 (strain M66-2).